We begin with the raw amino-acid sequence, 192 residues long: Glycerol-3-phosphate acyltransferase (192 aa).

5 helical membrane-spanning segments follow: residues 4–24 (MFWL…AILL), 54–74 (LAIL…LIAS), 80–100 (IAQQ…PVYF), 112–132 (AGVL…AWLL), and 154–174 (LLAW…LLIV).

The protein belongs to the PlsY family. As to quaternary structure, probably interacts with PlsX.

It localises to the cell inner membrane. It catalyses the reaction an acyl phosphate + sn-glycerol 3-phosphate = a 1-acyl-sn-glycero-3-phosphate + phosphate. The protein operates within lipid metabolism; phospholipid metabolism. Catalyzes the transfer of an acyl group from acyl-phosphate (acyl-PO(4)) to glycerol-3-phosphate (G3P) to form lysophosphatidic acid (LPA). This enzyme utilizes acyl-phosphate as fatty acyl donor, but not acyl-CoA or acyl-ACP. This chain is Glycerol-3-phosphate acyltransferase, found in Pseudomonas syringae pv. syringae (strain B728a).